Here is a 1173-residue protein sequence, read N- to C-terminus: Clustered mitochondria protein homolog (1173 aa).

Residues 1–21 show a composition bias toward low complexity; the sequence is MSTIDLPTSSLPGSSGDPSGT. Residues 1 to 25 form a disordered region; the sequence is MSTIDLPTSSLPGSSGDPSGTEMSH. Residues 316 to 565 enclose the Clu domain; the sequence is VPHRADLSRT…SLFPLDAQFL (250 aa). Residues 888-910 form a disordered region; sequence KFTGKKGNKKKRNLGKSQNTTNR. Positions 890-901 are enriched in basic residues; the sequence is TGKKGNKKKRNL. The stretch at 984 to 1017 is one TPR repeat; that stretch reads ARAYCQLAMIYHQLEKKEEAVELARKAVIVCERF.

It belongs to the CLU family. In terms of assembly, may associate with the eukaryotic translation initiation factor 3 (eIF-3) complex.

Its subcellular location is the cytoplasm. Functionally, mRNA-binding protein involved in proper cytoplasmic distribution of mitochondria. This is Clustered mitochondria protein homolog from Schizosaccharomyces pombe (strain 972 / ATCC 24843) (Fission yeast).